The chain runs to 347 residues: Phosphate acyltransferase (347 aa).

It belongs to the PlsX family. In terms of assembly, homodimer. Probably interacts with PlsY.

The protein localises to the cytoplasm. The catalysed reaction is a fatty acyl-[ACP] + phosphate = an acyl phosphate + holo-[ACP]. It participates in lipid metabolism; phospholipid metabolism. Catalyzes the reversible formation of acyl-phosphate (acyl-PO(4)) from acyl-[acyl-carrier-protein] (acyl-ACP). This enzyme utilizes acyl-ACP as fatty acyl donor, but not acyl-CoA. The chain is Phosphate acyltransferase from Anaplasma marginale (strain St. Maries).